A 254-amino-acid chain; its full sequence is MGRVIRNQRKGAGSIFTSHTRLRQGAAKLRTLDYAERHGYIRGVVKQIVHDAGRGAPLAKVVFRDPYKYKLREETFIANEGVHTGQFIYAGKNASLNVGNILPLGSVPEGTIVSNVEERPGDRGALARTSGNYVIVIGHNPDENKTRIRLPSGAKKIVSSDARGVIGVIAGGGRVDKPLLKAGRAFHKYKVKRNSWPKTRGVAMNPVDHPHGGGNHQHIGKASTISRGAVSGQKAGLIAARRTGLLRGSQKTQD.

It belongs to the universal ribosomal protein uL2 family.

In Eremothecium gossypii (strain ATCC 10895 / CBS 109.51 / FGSC 9923 / NRRL Y-1056) (Yeast), this protein is Large ribosomal subunit protein uL2 (RPL2).